The following is a 372-amino-acid chain: NAD(P)H-quinone oxidoreductase subunit 1 (372 aa).

Transmembrane regions (helical) follow at residues 27–47, 97–117, 128–148, 176–196, 204–224, 266–286, 308–328, and 347–367; these read IIWLPLPMLLVLVAAVVGVLV, ILFTAGPILVLVPVILSWLIV, VGIGIFLWIALSSIQPIGLLM, LALSVLAIVLMTNSLSTIDIV, ILSWNIWRQPVGFIVFWICAL, ILSALLVSILYLGGWGFPVPV, SIGIVMTVLKAYLLVFIAILL, and FLLPISLANLLITAGLKLAFP.

It belongs to the complex I subunit 1 family. In terms of assembly, NDH-1 is composed of at least 11 different subunits.

The protein localises to the cellular thylakoid membrane. The catalysed reaction is a plastoquinone + NADH + (n+1) H(+)(in) = a plastoquinol + NAD(+) + n H(+)(out). It carries out the reaction a plastoquinone + NADPH + (n+1) H(+)(in) = a plastoquinol + NADP(+) + n H(+)(out). Its function is as follows. NDH-1 shuttles electrons from an unknown electron donor, via FMN and iron-sulfur (Fe-S) centers, to quinones in the respiratory and/or the photosynthetic chain. The immediate electron acceptor for the enzyme in this species is believed to be plastoquinone. Couples the redox reaction to proton translocation, and thus conserves the redox energy in a proton gradient. The polypeptide is NAD(P)H-quinone oxidoreductase subunit 1 (Prochlorococcus marinus (strain AS9601)).